A 180-amino-acid polypeptide reads, in one-letter code: Probable cobalt-precorrin-6B C(15)-methyltransferase (decarboxylating) (180 aa).

Residues Thr16, 40 to 44 (GCGSG), Asp61, and Ala89 each bind S-adenosyl-L-methionine.

It belongs to the methyltransferase superfamily. Archaeal-type CbiT family.

The catalysed reaction is Co-precorrin-6B + S-adenosyl-L-methionine = Co-precorrin-7 + S-adenosyl-L-homocysteine + CO2. Its pathway is cofactor biosynthesis; adenosylcobalamin biosynthesis; cob(II)yrinate a,c-diamide from sirohydrochlorin (anaerobic route): step 8/10. Functionally, catalyzes the methylation of C-15 in cobalt-precorrin-6B followed by the decarboxylation of C-12 to form cobalt-precorrin-7. The polypeptide is Probable cobalt-precorrin-6B C(15)-methyltransferase (decarboxylating) (Methanococcus vannielii (strain ATCC 35089 / DSM 1224 / JCM 13029 / OCM 148 / SB)).